The following is a 968-amino-acid chain: A disintegrin and metalloproteinase with thrombospondin motifs 1 (968 aa).

Disordered stretches follow at residues 1–23 (MQPK…DVQR) and 177–253 (APAV…RKKR). The N-terminal stretch at 1–48 (MQPKVPLGSRKQKPCSDMGDVQRAARSRGSLSAHMLLLLLASITMLLC) is a signal peptide. Residues 49-253 (ARGAHGRPTE…SGPGSIRKKR (205 aa)) constitute a propeptide that is removed on maturation. The Cysteine switch signature appears at 204 to 211 (AKCGVMDD). Residue Cys206 coordinates Zn(2+). The span at 214–229 (LPTSDSRPESQNTRNQ) shows a compositional bias: polar residues. One can recognise a Peptidase M12B domain in the interval 259 to 468 (RYVETMLVAD…GHGECLMDKP (210 aa)). 3 residues coordinate Ca(2+): Glu262, Asp345, and Asp352. Intrachain disulfides connect Cys334–Cys386, Cys363–Cys368, Cys380–Cys463, and Cys418–Cys447. His402 lines the Zn(2+) pocket. Glu403 is an active-site residue. Zn(2+)-binding residues include His406 and His412. The Ca(2+) site is built by Cys463 and Asp466. A Disintegrin domain is found at 477–559 (DLPGTLYDAN…TDMKHFATPV (83 aa)). 4 disulfide bridges follow: Cys489-Cys512, Cys500-Cys522, Cys507-Cys541, and Cys535-Cys546. N-linked (GlcNAc...) asparagine glycosylation is present at Asn548. The TSP type-1 1 domain occupies 560 to 615 (HGSWGPWGPWGDCSRTCGGGVQYTMRECDNPVPKNGGKYCEGKRVRYRSCNIEDCP). 3 disulfides stabilise this stretch: Cys572-Cys609, Cys576-Cys614, and Cys587-Cys599. 3 N-linked (GlcNAc...) asparagine glycosylation sites follow: Asn721, Asn765, and Asn783. The interval 726–850 (KKMSGIVTST…YFMKKKTESF (125 aa)) is spacer. 2 TSP type-1 domains span residues 855–911 (TFSE…LPCP) and 912–968 (HWQV…TQCS). The N-linked (GlcNAc...) asparagine glycan is linked to Asn946.

The cofactor is Zn(2+). In terms of processing, the precursor is cleaved by a furin endopeptidase. Post-translationally, glycosylated. Can be O-fucosylated by POFUT2 on a serine or a threonine residue found within the consensus sequence C1-X(2)-(S/T)-C2-G of the TSP type-1 repeat domains where C1 and C2 are the first and second cysteine residue of the repeat, respectively. Fucosylated repeats can then be further glycosylated by the addition of a beta-1,3-glucose residue by the glucosyltransferase, B3GALTL. Fucosylation mediates the efficient secretion of ADAMTS family members. Can also be C-glycosylated with one or two mannose molecules on tryptophan residues within the consensus sequence W-X-X-W of the TPRs, and N-glycosylated. These other glycosylations can also facilitate secretion.

It localises to the secreted. The protein localises to the extracellular space. Its subcellular location is the extracellular matrix. Metalloprotease which cleaves aggrecan, a cartilage proteoglycan, at the '1691-Glu-|-Leu-1692' site (within the chondroitin sulfate attachment domain), and may be involved in its turnover. Also cleaves COMP. Has angiogenic inhibitor activity. May play a critical role in follicular rupture. The polypeptide is A disintegrin and metalloproteinase with thrombospondin motifs 1 (Adamts1) (Mus musculus (Mouse)).